Consider the following 407-residue polypeptide: Imidazolonepropionase (407 aa).

Residues H74 and H76 each coordinate Fe(3+). Zn(2+)-binding residues include H74 and H76. 4-imidazolone-5-propanoate-binding residues include R83, Y146, and H179. Y146 is a binding site for N-formimidoyl-L-glutamate. H244 contacts Fe(3+). Position 244 (H244) interacts with Zn(2+). Q247 serves as a coordination point for 4-imidazolone-5-propanoate. A Fe(3+)-binding site is contributed by D319. D319 serves as a coordination point for Zn(2+). Positions 321 and 323 each coordinate N-formimidoyl-L-glutamate. 4-imidazolone-5-propanoate is bound at residue T324.

The protein belongs to the metallo-dependent hydrolases superfamily. HutI family. The cofactor is Zn(2+). It depends on Fe(3+) as a cofactor.

It localises to the cytoplasm. The catalysed reaction is 4-imidazolone-5-propanoate + H2O = N-formimidoyl-L-glutamate. It participates in amino-acid degradation; L-histidine degradation into L-glutamate; N-formimidoyl-L-glutamate from L-histidine: step 3/3. Catalyzes the hydrolytic cleavage of the carbon-nitrogen bond in imidazolone-5-propanoate to yield N-formimidoyl-L-glutamate. It is the third step in the universal histidine degradation pathway. In Salmonella typhimurium (strain LT2 / SGSC1412 / ATCC 700720), this protein is Imidazolonepropionase.